Consider the following 168-residue polypeptide: Photosystem I assembly protein Ycf3 (168 aa).

3 TPR repeats span residues 35-68 (AFTY…EIDP), 72-105 (SYIL…NPFL), and 120-153 (GEEA…TPGN).

Belongs to the Ycf3 family.

It is found in the plastid. The protein localises to the chloroplast thylakoid membrane. In terms of biological role, essential for the assembly of the photosystem I (PSI) complex. May act as a chaperone-like factor to guide the assembly of the PSI subunits. The sequence is that of Photosystem I assembly protein Ycf3 from Nuphar advena (Common spatterdock).